Reading from the N-terminus, the 277-residue chain is Histone-lysine N-methyltransferase set-17 (277 aa).

An SET domain is found at 135–246 (FRIEESKLPN…INQELLVWYG (112 aa)). S-adenosyl-L-methionine is bound at residue Tyr-245.

This sequence belongs to the class V-like SAM-binding methyltransferase superfamily. As to expression, expressed in the germline. Predominantly expressed in primary spermatocytes. Also expressed in the oocyte-producing germline of hermaphrodites.

It localises to the nucleus. It catalyses the reaction N(6)-methyl-L-lysyl(4)-[histone H3] + S-adenosyl-L-methionine = N(6),N(6)-dimethyl-L-lysyl(4)-[histone H3] + S-adenosyl-L-homocysteine + H(+). The enzyme catalyses L-lysyl(4)-[histone H3] + S-adenosyl-L-methionine = N(6)-methyl-L-lysyl(4)-[histone H3] + S-adenosyl-L-homocysteine + H(+). Histone methyltransferase that specifically mono- and di-methylates 'Lys-4' of histone H3 in vitro. Does not tri-methylate 'Lys-4' of histone H3 in vitro. Promotes spermatid development and fertility by positively regulating the transcription of spermatocyte-specific genes in primary spermatocytes. Together with spr-5, required for transgenerational fertility. This Caenorhabditis elegans protein is Histone-lysine N-methyltransferase set-17.